The primary structure comprises 398 residues: Phosphoglycerate kinase (398 aa).

Residues 23–25 (DFN), Arg-38, 61–64 (HMGK), Arg-122, and Arg-155 each bind substrate. Residues Lys-206, Gly-297, Glu-328, and 354-357 (GGDS) contribute to the ATP site.

The protein belongs to the phosphoglycerate kinase family. As to quaternary structure, monomer.

It localises to the cytoplasm. It catalyses the reaction (2R)-3-phosphoglycerate + ATP = (2R)-3-phospho-glyceroyl phosphate + ADP. It functions in the pathway carbohydrate degradation; glycolysis; pyruvate from D-glyceraldehyde 3-phosphate: step 2/5. In Clostridium botulinum (strain 657 / Type Ba4), this protein is Phosphoglycerate kinase.